We begin with the raw amino-acid sequence, 272 residues long: Ribosomal RNA small subunit methyltransferase J (272 aa).

S-adenosyl-L-methionine is bound by residues 120–121 (RD), 136–137 (ER), 171–172 (SS), and Asp188.

The protein belongs to the methyltransferase superfamily. RsmJ family.

The protein localises to the cytoplasm. The catalysed reaction is guanosine(1516) in 16S rRNA + S-adenosyl-L-methionine = N(2)-methylguanosine(1516) in 16S rRNA + S-adenosyl-L-homocysteine + H(+). In terms of biological role, specifically methylates the guanosine in position 1516 of 16S rRNA. This Colwellia psychrerythraea (strain 34H / ATCC BAA-681) (Vibrio psychroerythus) protein is Ribosomal RNA small subunit methyltransferase J.